Reading from the N-terminus, the 1061-residue chain is Transcription termination factor 2 (1061 aa).

Disordered stretches follow at residues 1–163 and 212–253; these read MSSE…TAEA and ILSS…VKTS. Residues 32-46 show a composition bias toward low complexity; it reads LSKSSRLSKSSRPSS. Phosphoserine is present on residues S108 and S110. Residues 138-152 show a composition bias toward acidic residues; it reads LSDDDSEIEYSDEVQ. A phosphoserine mark is found at S214 and S215. T216 carries the phosphothreonine modification. The segment covering 237 to 253 has biased composition (polar residues); that stretch reads KSLSPRSSAGASVVKTS. Positions 452 to 652 constitute a Helicase ATP-binding domain; it reads WRERKLPRGG…YALLKFLRCS (201 aa). 465–472 is an ATP binding site; that stretch reads DDMGLGKT. The interval 485–523 is disordered; it reads GQEMSEGKDESSDSDSEDDKNKKRKSVTGWKSKGRKDTR. Over residues 506-522 the composition is skewed to basic residues; that stretch reads KKRKSVTGWKSKGRKDT. The DEAH box signature appears at 603–606; it reads DEAH. The 166-residue stretch at 891–1056 folds into the Helicase C-terminal domain; it reads KINMVIQILK…SSKLTIDDLK (166 aa).

It belongs to the SNF2/RAD54 helicase family.

It is found in the nucleus. Functionally, dsDNA-dependent ATPase which acts as a transcription termination factor by coupling ATP hydrolysis with removal of RNA polymerase II from the DNA template. This is Transcription termination factor 2 (lds) from Drosophila melanogaster (Fruit fly).